The chain runs to 80 residues: Small ribosomal subunit protein uS17 (80 aa).

The protein belongs to the universal ribosomal protein uS17 family. Part of the 30S ribosomal subunit.

Functionally, one of the primary rRNA binding proteins, it binds specifically to the 5'-end of 16S ribosomal RNA. In Microcystis aeruginosa (strain NIES-843 / IAM M-2473), this protein is Small ribosomal subunit protein uS17.